A 558-amino-acid polypeptide reads, in one-letter code: Tektin-5 (558 aa).

Positions 347–381 (ISEETDVKNKLQTQLAKILQEIFQAENTIMLLERA) form a coiled coil.

It belongs to the tektin family. In terms of assembly, microtubule inner protein component of sperm flagellar doublet microtubules. Interacts with TEKT3. Post-translationally, ubiquitinated, leading to its degradation. Deubiquitinated by USP16, promoting its stability. In terms of tissue distribution, specifically expressed in testis.

It localises to the cytoplasm. It is found in the cytoskeleton. The protein localises to the flagellum axoneme. Sperm-specific microtubule inner protein (MIP) part of the dynein-decorated doublet microtubules (DMTs) in flagellar axoneme. Forms an extensive interaction network in different conformations that reinforces the helix bundle composed by other tektin proteins (TEKT1 to TEKT4) and MIPs to anchor the tektin bundle onto the tubulin wall of A-tubule of the sperm flagellum. In Rattus norvegicus (Rat), this protein is Tektin-5.